We begin with the raw amino-acid sequence, 135 residues long: Protein Wnt-7a (135 aa).

2 disulfides stabilise this stretch: cysteine 3–cysteine 17 and cysteine 5–cysteine 12. The O-palmitoleoyl serine; by PORCN moiety is linked to residue serine 9. Residues 41-69 (VEPVRASRNKRPTFLKIKKPLSYRKPMDT) are disordered linker. Disulfide bonds link cysteine 81–cysteine 112, cysteine 97–cysteine 107, cysteine 111–cysteine 134, and cysteine 130–cysteine 131. An N-linked (GlcNAc...) asparagine glycan is attached at asparagine 98.

This sequence belongs to the Wnt family. In terms of processing, palmitoleoylation is required for efficient binding to frizzled receptors. Depalmitoleoylation leads to Wnt signaling pathway inhibition. In terms of tissue distribution, in embryo, in brain and ventral neural tube; in adults, in brain.

The protein resides in the secreted. Its subcellular location is the extracellular space. It localises to the extracellular matrix. Ligand for members of the frizzled family of seven transmembrane receptors that functions in the canonical Wnt/beta-catenin signaling pathway. Plays an important role in embryonic development, including dorsal versus ventral patterning during limb development, skeleton development and urogenital tract development. Required for central nervous system (CNS) angiogenesis and blood-brain barrier regulation. The chain is Protein Wnt-7a (wnt7a) from Xenopus laevis (African clawed frog).